A 92-amino-acid chain; its full sequence is N(2)-fixation sustaining protein CowN (92 aa).

The protein belongs to the CowN family.

In terms of biological role, is required to sustain N(2)-dependent growth in the presence of low levels of carbon monoxide (CO). Probably acts by protecting the N(2) fixation ability of the nitrogenase complex, which is inactivated in the presence of CO. The polypeptide is N(2)-fixation sustaining protein CowN (Rhodopseudomonas palustris (strain BisB18)).